A 180-amino-acid chain; its full sequence is Fetal and adult testis-expressed transcript protein homolog (180 aa).

Residues glycine 77 to serine 108 form a disordered region. The span at glycine 84 to glycine 93 shows a compositional bias: gly residues. Residues proline 96–arginine 107 show a composition bias toward polar residues. Residues valine 160 to methionine 178 traverse the membrane as a helical segment.

As to quaternary structure, interacts with BIK and RNF183. Interacts with IMMT/MIC60and EMD.

The protein localises to the mitochondrion. The protein resides in the mitochondrion outer membrane. It localises to the endoplasmic reticulum membrane. In terms of biological role, involved in the regulation of endoplasmic reticulum (ER)-mitochondria coupling. Negatively regulates the ER-mitochondria distance and Ca(2+) transfer from ER to mitochondria possibly implicating it in the regulation of apoptosis. May collaborate with RNF183 to restrain BIK protein levels thus regulating apoptotic signaling. The chain is Fetal and adult testis-expressed transcript protein homolog (FATE1) from Bos taurus (Bovine).